Reading from the N-terminus, the 631-residue chain is tRNA uridine 5-carboxymethylaminomethyl modification enzyme MnmG (631 aa).

Position 15–20 (15–20 (GAGHAG)) interacts with FAD. A disordered region spans residues 214–233 (YSKTEEEPGDKEPRHFSFTS). 276–290 (GPRYCPSIETKVVRF) provides a ligand contact to NAD(+).

The protein belongs to the MnmG family. Homodimer. Heterotetramer of two MnmE and two MnmG subunits. Requires FAD as cofactor.

It localises to the cytoplasm. Its function is as follows. NAD-binding protein involved in the addition of a carboxymethylaminomethyl (cmnm) group at the wobble position (U34) of certain tRNAs, forming tRNA-cmnm(5)s(2)U34. The polypeptide is tRNA uridine 5-carboxymethylaminomethyl modification enzyme MnmG (Lactobacillus delbrueckii subsp. bulgaricus (strain ATCC 11842 / DSM 20081 / BCRC 10696 / JCM 1002 / NBRC 13953 / NCIMB 11778 / NCTC 12712 / WDCM 00102 / Lb 14)).